A 354-amino-acid chain; its full sequence is N-acetyl-gamma-glutamyl-phosphate reductase (354 aa).

Residue Cys156 is part of the active site.

Belongs to the NAGSA dehydrogenase family. Type 1 subfamily.

Its subcellular location is the cytoplasm. It carries out the reaction N-acetyl-L-glutamate 5-semialdehyde + phosphate + NADP(+) = N-acetyl-L-glutamyl 5-phosphate + NADPH + H(+). Its pathway is amino-acid biosynthesis; L-arginine biosynthesis; N(2)-acetyl-L-ornithine from L-glutamate: step 3/4. Its function is as follows. Catalyzes the NADPH-dependent reduction of N-acetyl-5-glutamyl phosphate to yield N-acetyl-L-glutamate 5-semialdehyde. The chain is N-acetyl-gamma-glutamyl-phosphate reductase from Bordetella pertussis (strain Tohama I / ATCC BAA-589 / NCTC 13251).